The following is a 260-amino-acid chain: HTH-type transcriptional repressor NanR (260 aa).

One can recognise an HTH gntR-type domain in the interval lysine 27–proline 95. The H-T-H motif DNA-binding region spans glutamate 55–alanine 74.

The protein belongs to the NanR family.

In terms of biological role, transcriptional repressor that controls expression of the genes required for the catabolism of sialic acids. The chain is HTH-type transcriptional repressor NanR from Enterobacter sp. (strain 638).